We begin with the raw amino-acid sequence, 30 residues long: Cyclotide hypa-A (30 aa).

A cross-link (cyclopeptide (Gly-Asn)) is located at residues 1-30; sequence GIPCAESCVYIPCTITALLGCSCKNKVCYN. 3 cysteine pairs are disulfide-bonded: Cys4-Cys21, Cys8-Cys23, and Cys13-Cys28.

In terms of processing, this is a cyclic peptide.

Probably participates in a plant defense mechanism. This is Cyclotide hypa-A from Pombalia parviflora (Violetilla).